The chain runs to 99 residues: uncharacterized protein (99 aa).

This is an uncharacterized protein from Acidianus bottle-shaped virus (isolate Italy/Pozzuoli) (ABV).